Reading from the N-terminus, the 250-residue chain is Pyrroloquinoline-quinone synthase (250 aa).

The protein belongs to the PqqC family.

It catalyses the reaction 6-(2-amino-2-carboxyethyl)-7,8-dioxo-1,2,3,4,7,8-hexahydroquinoline-2,4-dicarboxylate + 3 O2 = pyrroloquinoline quinone + 2 H2O2 + 2 H2O + H(+). The protein operates within cofactor biosynthesis; pyrroloquinoline quinone biosynthesis. In terms of biological role, ring cyclization and eight-electron oxidation of 3a-(2-amino-2-carboxyethyl)-4,5-dioxo-4,5,6,7,8,9-hexahydroquinoline-7,9-dicarboxylic-acid to PQQ. In Xanthomonas axonopodis pv. citri (strain 306), this protein is Pyrroloquinoline-quinone synthase.